The sequence spans 158 residues: 2-C-methyl-D-erythritol 2,4-cyclodiphosphate synthase (158 aa).

A divalent metal cation-binding residues include aspartate 9 and histidine 11. 4-CDP-2-C-methyl-D-erythritol 2-phosphate-binding positions include 9 to 11 (DVH) and 35 to 36 (HS). Histidine 43 lines the a divalent metal cation pocket. Residues 57-59 (DIG), 62-66 (FPDTD), 101-107 (AQKPKMA), 133-136 (TTTE), phenylalanine 140, and arginine 143 each bind 4-CDP-2-C-methyl-D-erythritol 2-phosphate.

It belongs to the IspF family. In terms of assembly, homotrimer. It depends on a divalent metal cation as a cofactor.

It catalyses the reaction 4-CDP-2-C-methyl-D-erythritol 2-phosphate = 2-C-methyl-D-erythritol 2,4-cyclic diphosphate + CMP. The protein operates within isoprenoid biosynthesis; isopentenyl diphosphate biosynthesis via DXP pathway; isopentenyl diphosphate from 1-deoxy-D-xylulose 5-phosphate: step 4/6. Its function is as follows. Involved in the biosynthesis of isopentenyl diphosphate (IPP) and dimethylallyl diphosphate (DMAPP), two major building blocks of isoprenoid compounds. Catalyzes the conversion of 4-diphosphocytidyl-2-C-methyl-D-erythritol 2-phosphate (CDP-ME2P) to 2-C-methyl-D-erythritol 2,4-cyclodiphosphate (ME-CPP) with a corresponding release of cytidine 5-monophosphate (CMP). The chain is 2-C-methyl-D-erythritol 2,4-cyclodiphosphate synthase from Bacillus cereus (strain B4264).